Here is a 270-residue protein sequence, read N- to C-terminus: 4-hydroxy-tetrahydrodipicolinate reductase (270 aa).

NAD(+) is bound by residues 9-14 and Glu-35; that span reads GAGGRM. Arg-36 serves as a coordination point for NADP(+). Residues 99–101 and 123–126 contribute to the NAD(+) site; these read GTT and ASNY. Residue His-156 is the Proton donor/acceptor of the active site. His-157 contacts (S)-2,3,4,5-tetrahydrodipicolinate. The Proton donor role is filled by Lys-160. 166 to 167 contacts (S)-2,3,4,5-tetrahydrodipicolinate; the sequence is GT.

This sequence belongs to the DapB family.

It is found in the cytoplasm. The catalysed reaction is (S)-2,3,4,5-tetrahydrodipicolinate + NAD(+) + H2O = (2S,4S)-4-hydroxy-2,3,4,5-tetrahydrodipicolinate + NADH + H(+). The enzyme catalyses (S)-2,3,4,5-tetrahydrodipicolinate + NADP(+) + H2O = (2S,4S)-4-hydroxy-2,3,4,5-tetrahydrodipicolinate + NADPH + H(+). The protein operates within amino-acid biosynthesis; L-lysine biosynthesis via DAP pathway; (S)-tetrahydrodipicolinate from L-aspartate: step 4/4. Its function is as follows. Catalyzes the conversion of 4-hydroxy-tetrahydrodipicolinate (HTPA) to tetrahydrodipicolinate. This chain is 4-hydroxy-tetrahydrodipicolinate reductase, found in Mannheimia succiniciproducens (strain KCTC 0769BP / MBEL55E).